The sequence spans 388 residues: Na(+)/H(+) antiporter NhaA (388 aa).

Over 1 to 11 the chain is Cytoplasmic; the sequence is MKHLHRFFSSD. A helical membrane pass occupies residues 12-31; that stretch reads ASGGIILIIAAVLAMIMANS. Residues 32–58 lie on the Periplasmic side of the membrane; the sequence is GATSGWYHDFLETPVQLRVGTLEINKN. A helical membrane pass occupies residues 59 to 80; sequence MLLWINDALMAVFFLLVGLEVK. Over 81-96 the chain is Cytoplasmic; the sequence is RELMQGSLASLRQAAF. The helical transmembrane segment at 97–116 threads the bilayer; it reads PVIAAIGGMIVPALLYLAFN. Residues 117–122 are Periplasmic-facing; the sequence is YADPIT. The chain crosses the membrane as a helical span at residues 123-130; it reads REGWAIPA. Residues 131-154 lie on the Cytoplasmic side of the membrane; it reads ATDIAFALGVLALLGSRVPLALKI. The chain crosses the membrane as a helical span at residues 155–176; the sequence is FLMALAIIDDLGAIIIIALFYT. Over 177-180 the chain is Periplasmic; it reads NDLS. The helical transmembrane segment at 181-200 threads the bilayer; it reads MASLGVAAVAIAVLAVLNLC. The Cytoplasmic portion of the chain corresponds to 201-204; the sequence is GVRR. The helical transmembrane segment at 205–222 threads the bilayer; sequence TGVYILVGVVLWTAVLKS. Gly223 is a topological domain (periplasmic). The chain crosses the membrane as a helical span at residues 224 to 236; it reads VHATLAGVIVGFF. The Cytoplasmic segment spans residues 237–253; it reads IPLKEKHGRSPAKRLEH. A helical transmembrane segment spans residues 254–272; it reads VLHPWVAYLILPLFAFANA. The Periplasmic segment spans residues 273–286; that stretch reads GVSLQGVTLEGLTS. The helical transmembrane segment at 287–310 threads the bilayer; sequence ILPLGIIAGLLIGKPLGISLFCWL. Topologically, residues 311–339 are cytoplasmic; it reads ALRLKLAHLPEGTTYQQIMAVGILCGIGF. The chain crosses the membrane as a helical span at residues 340 to 350; sequence TMSIFIASLAF. Residues 351-357 are Periplasmic-facing; the sequence is GSVDPEL. The chain crosses the membrane as a helical span at residues 358–380; sequence INWAKLGILVGSISSAVIGYSWL. Residues 381–388 lie on the Cytoplasmic side of the membrane; it reads RVRLRPSV.

The protein belongs to the NhaA Na(+)/H(+) (TC 2.A.33) antiporter family.

It is found in the cell inner membrane. The enzyme catalyses Na(+)(in) + 2 H(+)(out) = Na(+)(out) + 2 H(+)(in). In terms of biological role, na(+)/H(+) antiporter that extrudes sodium in exchange for external protons. The polypeptide is Na(+)/H(+) antiporter NhaA (Escherichia coli O6:K15:H31 (strain 536 / UPEC)).